A 766-amino-acid chain; its full sequence is Protein sak1 (766 aa).

The segment at residues G101 to G176 is a DNA-binding region (RFX-type winged-helix). A phosphoserine mark is found at S223, S224, and S227. 2 disordered regions span residues P271 to Y308 and L708 to Q731. Positions H279–L289 are enriched in polar residues. 2 stretches are compositionally biased toward low complexity: residues S290–Y308 and Q715–Q731.

This sequence belongs to the RFX family.

It localises to the nucleus. Positively regulates cyclic AMP-dependent protein kinase-mediated exit from the mitotic cell cycle. The chain is Protein sak1 (sak1) from Schizosaccharomyces pombe (strain 972 / ATCC 24843) (Fission yeast).